Reading from the N-terminus, the 879-residue chain is Alanine--tRNA ligase (879 aa).

Residues 426–449 are disordered; it reads KQKERARNARGNMDGESWKEDPLS. Zn(2+) is bound by residues H566, H570, C668, and H672.

This sequence belongs to the class-II aminoacyl-tRNA synthetase family. Requires Zn(2+) as cofactor.

It localises to the cytoplasm. The catalysed reaction is tRNA(Ala) + L-alanine + ATP = L-alanyl-tRNA(Ala) + AMP + diphosphate. Catalyzes the attachment of alanine to tRNA(Ala) in a two-step reaction: alanine is first activated by ATP to form Ala-AMP and then transferred to the acceptor end of tRNA(Ala). Also edits incorrectly charged Ser-tRNA(Ala) and Gly-tRNA(Ala) via its editing domain. The protein is Alanine--tRNA ligase of Clostridioides difficile (strain 630) (Peptoclostridium difficile).